A 413-amino-acid polypeptide reads, in one-letter code: ORC1-type DNA replication protein 10 (413 aa).

ATP-binding positions include 63–67 (VGKTA), Y211, and R223.

It belongs to the CDC6/cdc18 family.

In terms of biological role, involved in regulation of DNA replication. The protein is ORC1-type DNA replication protein 10 (orc10) of Halobacterium salinarum (strain ATCC 700922 / JCM 11081 / NRC-1) (Halobacterium halobium).